A 424-amino-acid polypeptide reads, in one-letter code: Serine--tRNA ligase (424 aa).

231 to 233 is an L-serine binding site; the sequence is TAE. 262 to 264 contacts ATP; the sequence is RAE. Glu-285 is an L-serine binding site. Residue 349 to 352 participates in ATP binding; sequence EISS. Position 385 (Ser-385) interacts with L-serine.

It belongs to the class-II aminoacyl-tRNA synthetase family. Type-1 seryl-tRNA synthetase subfamily. As to quaternary structure, homodimer. The tRNA molecule binds across the dimer.

It is found in the cytoplasm. The enzyme catalyses tRNA(Ser) + L-serine + ATP = L-seryl-tRNA(Ser) + AMP + diphosphate + H(+). The catalysed reaction is tRNA(Sec) + L-serine + ATP = L-seryl-tRNA(Sec) + AMP + diphosphate + H(+). It functions in the pathway aminoacyl-tRNA biosynthesis; selenocysteinyl-tRNA(Sec) biosynthesis; L-seryl-tRNA(Sec) from L-serine and tRNA(Sec): step 1/1. Functionally, catalyzes the attachment of serine to tRNA(Ser). Is also able to aminoacylate tRNA(Sec) with serine, to form the misacylated tRNA L-seryl-tRNA(Sec), which will be further converted into selenocysteinyl-tRNA(Sec). This chain is Serine--tRNA ligase, found in Geobacillus sp. (strain WCH70).